The sequence spans 324 residues: Corticotropin-releasing factor-binding protein (324 aa).

Residues 1–23 form the signal peptide; it reads MAPTLKLQCHFILVCLLALRGES. 5 disulfides stabilise this stretch: cysteine 62/cysteine 83, cysteine 106/cysteine 143, cysteine 185/cysteine 207, cysteine 239/cysteine 266, and cysteine 279/cysteine 320. The N-linked (GlcNAc...) asparagine glycan is linked to asparagine 206.

Belongs to the CRF-binding protein family.

It is found in the secreted. Binds CRF and inactivates it. May prevent inappropriate pituitary-adrenal stimulation in pregnancy. The protein is Corticotropin-releasing factor-binding protein (CRHBP) of Ovis aries (Sheep).